We begin with the raw amino-acid sequence, 371 residues long: L-lysine 4-hydroxylase (371 aa).

Fe cation-binding residues include His-174, Glu-176, and His-310.

It belongs to the clavaminate synthase family. Fe(2+) serves as cofactor.

It catalyses the reaction L-lysine + 2-oxoglutarate + O2 = (4R)-4-hydroxy-L-lysine + succinate + CO2. Functionally, alpha-ketoglutarate-dependent dioxygenase that in vitro catalyzes the regio- and stereoselective hydroxylation of L-lysine, leading to (4R)-4-hydroxy-L-lysine. This Niastella koreensis (strain DSM 17620 / KACC 11465 / NBRC 106392 / GR20-10) protein is L-lysine 4-hydroxylase.